Reading from the N-terminus, the 136-residue chain is Probable intron-encoded DNA endonuclease 3 (136 aa).

The protein belongs to the LAGLIDADG endonuclease family.

It is found in the mitochondrion. Functionally, mitochondrial DNA endonuclease involved in intron homing. The protein is Probable intron-encoded DNA endonuclease 3 (hegI3) of Mycosarcoma maydis (Corn smut fungus).